A 201-amino-acid chain; its full sequence is ATP-dependent Clp protease proteolytic subunit (201 aa).

The Nucleophile role is filled by Ser98. His123 is an active-site residue.

It belongs to the peptidase S14 family. Fourteen ClpP subunits assemble into 2 heptameric rings which stack back to back to give a disk-like structure with a central cavity, resembling the structure of eukaryotic proteasomes.

The protein localises to the cytoplasm. The catalysed reaction is Hydrolysis of proteins to small peptides in the presence of ATP and magnesium. alpha-casein is the usual test substrate. In the absence of ATP, only oligopeptides shorter than five residues are hydrolyzed (such as succinyl-Leu-Tyr-|-NHMec, and Leu-Tyr-Leu-|-Tyr-Trp, in which cleavage of the -Tyr-|-Leu- and -Tyr-|-Trp bonds also occurs).. Cleaves peptides in various proteins in a process that requires ATP hydrolysis. Has a chymotrypsin-like activity. Plays a major role in the degradation of misfolded proteins. The sequence is that of ATP-dependent Clp protease proteolytic subunit from Desulfatibacillum aliphaticivorans.